The sequence spans 275 residues: MNGESGDAITSRRIVLGVQYDGAPWQGWQTQLNGLTVQDKLEFALYKFTQQTITTACAGRTDAGVHALEQVVHFDTTLERDMQSWVRGVNTFLPSSIAVRWASEVAHDPAENFHARFSARSRTYHYMLYNNPVRSPLLEGKAGWVFRALDIAKMQEAAAHLLGQHDFSAFRSVQCQAKSPVKTMHAIKIERRGDLIMFTVHANAFLHHMVRNIVGSLIYVGNGTQAPSWLKEVLAGQERKFAAPTFMPDGLYLAKIDYDPKWQLPQTEIQNFLWS.

Residue D62 is the Nucleophile of the active site. Y124 is a substrate binding site.

The protein belongs to the tRNA pseudouridine synthase TruA family. As to quaternary structure, homodimer.

The catalysed reaction is uridine(38/39/40) in tRNA = pseudouridine(38/39/40) in tRNA. In terms of biological role, formation of pseudouridine at positions 38, 39 and 40 in the anticodon stem and loop of transfer RNAs. The sequence is that of tRNA pseudouridine synthase A from Herminiimonas arsenicoxydans.